A 944-amino-acid chain; its full sequence is Isoleucine--tRNA ligase (944 aa).

A 'HIGH' region motif is present at residues 58 to 68; the sequence is PYANGQIHIGH. Glu568 contacts L-isoleucyl-5'-AMP. Residues 609-613 carry the 'KMSKS' region motif; it reads KMSKS. Residue Lys612 coordinates ATP. Zn(2+) contacts are provided by Cys907, Cys910, Cys927, and Cys930.

This sequence belongs to the class-I aminoacyl-tRNA synthetase family. IleS type 1 subfamily. In terms of assembly, monomer. Zn(2+) serves as cofactor.

The protein resides in the cytoplasm. It catalyses the reaction tRNA(Ile) + L-isoleucine + ATP = L-isoleucyl-tRNA(Ile) + AMP + diphosphate. In terms of biological role, catalyzes the attachment of isoleucine to tRNA(Ile). As IleRS can inadvertently accommodate and process structurally similar amino acids such as valine, to avoid such errors it has two additional distinct tRNA(Ile)-dependent editing activities. One activity is designated as 'pretransfer' editing and involves the hydrolysis of activated Val-AMP. The other activity is designated 'posttransfer' editing and involves deacylation of mischarged Val-tRNA(Ile). This is Isoleucine--tRNA ligase from Idiomarina loihiensis (strain ATCC BAA-735 / DSM 15497 / L2-TR).